The following is a 545-amino-acid chain: MTTNYIFVTGGVVSSLGKGIAAASLAAILEARGLNVTIMKLDPYINVDPGTMSPTQHGEVFVTEDGAETDLDLGHYERFIRTKMTRRNNFTTGRIYSEVLRKERRGDYLGATIQVIPHITNAIKERIIEGGEGHDVVLVEIGGTVGDIESLPFLEAIRQMAVDVGREHTLYMHLTLVPYLAAAGEVKTKPTQHSVKELLSIGIQPDVLICRSDRAVPANERAKIALFCNVPEKAVISLKDVDSIYKIPGLLKSQGLDDYICKRFSLTCPEANLAEWEQVLYEESNPGGEVTIGMIGKYVELPDAYKSVIEALKHGGLKNRLTVNIKLIDSQDVETRGEEMLKGLDAILIPGGFGYRGVEGKVLAARYAREHNIPYLGICLGMQVALMEFARNVAGMENANSTEFVPDCKYPVVALITEWRDEDGNVEVRTEESDLGGTMRVGGQQCHLTEGSLVRQMYGEPTIVERHRHRYEVNNMLLKQIEAAGLRVAGRSADNKLVEIIELPNHPWFVACQFHPEFTSTPRDGHPLFAGFVKAAGEYQKRQVK.

An amidoligase domain region spans residues 1–266 (MTTNYIFVTG…DDYICKRFSL (266 aa)). A CTP-binding site is contributed by Ser-14. Ser-14 serves as a coordination point for UTP. ATP-binding positions include 15–20 (SLGKGI) and Asp-72. Asp-72 and Glu-140 together coordinate Mg(2+). CTP is bound by residues 147–149 (DIE), 187–192 (KTKPTQ), and Lys-223. UTP is bound by residues 187–192 (KTKPTQ) and Lys-223. 239–241 (KDV) provides a ligand contact to ATP. The region spanning 291 to 542 (TIGMIGKYVE…VKAAGEYQKR (252 aa)) is the Glutamine amidotransferase type-1 domain. Gly-352 lines the L-glutamine pocket. Residue Cys-379 is the Nucleophile; for glutamine hydrolysis of the active site. Residues 380–383 (LGMQ), Glu-403, and Arg-470 each bind L-glutamine. Residues His-515 and Glu-517 contribute to the active site.

The protein belongs to the CTP synthase family. In terms of assembly, homotetramer.

It carries out the reaction UTP + L-glutamine + ATP + H2O = CTP + L-glutamate + ADP + phosphate + 2 H(+). The enzyme catalyses L-glutamine + H2O = L-glutamate + NH4(+). It catalyses the reaction UTP + NH4(+) + ATP = CTP + ADP + phosphate + 2 H(+). It participates in pyrimidine metabolism; CTP biosynthesis via de novo pathway; CTP from UDP: step 2/2. With respect to regulation, allosterically activated by GTP, when glutamine is the substrate; GTP has no effect on the reaction when ammonia is the substrate. The allosteric effector GTP functions by stabilizing the protein conformation that binds the tetrahedral intermediate(s) formed during glutamine hydrolysis. Inhibited by the product CTP, via allosteric rather than competitive inhibition. Functionally, catalyzes the ATP-dependent amination of UTP to CTP with either L-glutamine or ammonia as the source of nitrogen. Regulates intracellular CTP levels through interactions with the four ribonucleotide triphosphates. This chain is CTP synthase, found in Yersinia enterocolitica serotype O:8 / biotype 1B (strain NCTC 13174 / 8081).